We begin with the raw amino-acid sequence, 246 residues long: Heavy metal-associated isoprenylated plant protein 8 (246 aa).

Residues 1–31 form a disordered region; sequence MGKNKQNGESDNKSEKKNQKNGDSSVDKSDK. The HMA 1 domain maps to 35–99; the sequence is CKEIVLKVYM…RVQKKFSRNA (65 aa). The a metal cation site is built by C46 and C49. Residues 96–122 form a disordered region; that stretch reads SRNAEMISPKHNPKQDQKEPQQKKESA. The span at 108 to 122 shows a compositional bias: basic and acidic residues; the sequence is PKQDQKEPQQKKESA. One can recognise an HMA 2 domain in the interval 125–189; sequence IKTAILRMNM…IKKKLGKHAE (65 aa). A metal cation-binding residues include C136 and C139. The tract at residues 191-226 is disordered; sequence LSQITEKGKDNNKKNNNKKEESDGNKIFSYPPQYSS. A compositionally biased stretch (basic and acidic residues) spans 196 to 214; that stretch reads EKGKDNNKKNNNKKEESDG. C243 is subject to Cysteine methyl ester. C243 is lipidated: S-farnesyl cysteine. Positions 244-246 are cleaved as a propeptide — removed in mature form; the sequence is SIM.

The protein belongs to the HIPP family.

Its function is as follows. Heavy-metal-binding protein. The chain is Heavy metal-associated isoprenylated plant protein 8 from Arabidopsis thaliana (Mouse-ear cress).